Consider the following 249-residue polypeptide: Probable cobalt-factor III C(17)-methyltransferase (249 aa).

It belongs to the precorrin methyltransferase family.

It catalyses the reaction Co(II)-factor III + S-adenosyl-L-methionine + H(+) = Co(II)-factor IV + S-adenosyl-L-homocysteine. It functions in the pathway cofactor biosynthesis; adenosylcobalamin biosynthesis; cob(II)yrinate a,c-diamide from sirohydrochlorin (anaerobic route): step 3/10. In terms of biological role, methyltransferase that likely catalyzes the ring contraction and methylation of C-17 in cobalt-factor III to form cobalt-factor IV. May also convert cobalt-precorrin-3 to cobalt-precorrin-4. In Methanocaldococcus jannaschii (strain ATCC 43067 / DSM 2661 / JAL-1 / JCM 10045 / NBRC 100440) (Methanococcus jannaschii), this protein is Probable cobalt-factor III C(17)-methyltransferase (cbiH).